Here is a 114-residue protein sequence, read N- to C-terminus: uncharacterized protein (114 aa).

Glycine 2 carries the N-myristoyl glycine; by host lipid modification. A run of 2 helical transmembrane segments spans residues 11–31 (FGLI…KDLL) and 44–64 (GLMW…LVAI). The disordered stretch occupies residues 73–114 (VNKDSKDPKDKSIEFDDSPIRDGSSGTPDNSNEPTDLSVETS). Over residues 75-92 (KDSKDPKDKSIEFDDSPI) the composition is skewed to basic and acidic residues. Residues 96–114 (SSGTPDNSNEPTDLSVETS) show a composition bias toward polar residues.

Its subcellular location is the membrane. This is an uncharacterized protein from Acanthamoeba polyphaga (Amoeba).